The chain runs to 398 residues: MSQNVYIVSTARTPIGSFQGSLSSKTAVELGAAALKGALAKVPELDASKDFDEIIFGNVLSANLGQAPARQVALTAGLGNHIVATTVNKVCASAMKAIILGAQSIKCGNADVVVAGGCESMTNAPYYMPAARGGAKFGQTVLIDGVERDGLNDAYDGLAMGVHAEKCARDWDITRDQQDSFAIESYQKSQQSQKEGKFDNEIVPVTIKGFRGKPDTQVTNDEEPARLHVEKLKSARTVFQRENGTVTAANASPINDGAAAIILVSERVLKEKNLKPLAIVKGWGEAAHLPADFTWAPSLAVPKALKHAGIEDINSVDYFEFNEAFSVVGLVNTKILKLDPSKVNVYGGAVALGHPLGCSGARVVVTLLSILQQEGGKIGVAAICNGGGGASSVVIEKL.

Residue Ser-2 is modified to N-acetylserine. The Acyl-thioester intermediate role is filled by Cys-91. Positions 186 and 231 each coordinate CoA. Residue Tyr-186 coordinates K(+). K(+) contacts are provided by Ala-248, Ala-249, and Ala-251. Position 252 (Ser-252) interacts with CoA. Residue Val-350 coordinates K(+). Active-site proton acceptor residues include His-354 and Cys-384.

Belongs to the thiolase-like superfamily. Thiolase family. Homotetramer.

The protein resides in the cytoplasm. It catalyses the reaction 2 acetyl-CoA = acetoacetyl-CoA + CoA. The protein operates within metabolic intermediate biosynthesis; (R)-mevalonate biosynthesis; (R)-mevalonate from acetyl-CoA: step 1/3. Functionally, acetyl-CoA acetyltransferase; part of the first module of ergosterol biosynthesis pathway that includes the early steps of the pathway, conserved across all eukaryotes, and which results in the formation of mevalonate from acetyl-coenzyme A (acetyl-CoA). In this module, the acetyl-CoA acetyltransferase ERG10 catalyzes the formation of acetoacetyl-CoA. The hydroxymethylglutaryl-CoA synthase ERG13 then condenses acetyl-CoA with acetoacetyl-CoA to form HMG-CoA. The rate-limiting step of the early module is the reduction to mevalonate by the 3-hydroxy-3-methylglutaryl-coenzyme A (HMG-CoA) reductases HMG1 and HMG2 which are derived from a single ancestral HMGR gene by gene duplication. The chain is Acetyl-CoA acetyltransferase from Saccharomyces pastorianus (strain ATCC 76670 / Carlsberg bottom yeast no.2 / CBS 1503 / CLIB 180 / NBRC 10610 / NRRL Y-1525) (Saaz-type lager yeast).